Reading from the N-terminus, the 367-residue chain is Inositol-3-phosphate synthase (367 aa).

6 residues coordinate NAD(+): Asp78, Ala137, Tyr157, Ser200, Asp235, and Lys248.

The protein belongs to the myo-inositol 1-phosphate synthase family. Requires NAD(+) as cofactor.

The catalysed reaction is D-glucose 6-phosphate = 1D-myo-inositol 3-phosphate. In terms of biological role, key enzyme in myo-inositol biosynthesis pathway that catalyzes the conversion of glucose 6-phosphate to 1D-myo-inositol 3-phosphate in a NAD-dependent manner. In Mycobacterium tuberculosis (strain CDC 1551 / Oshkosh), this protein is Inositol-3-phosphate synthase (ino1).